The chain runs to 41 residues: Large ribosomal subunit protein bL36 (41 aa).

It belongs to the bacterial ribosomal protein bL36 family.

This chain is Large ribosomal subunit protein bL36, found in Novosphingobium aromaticivorans (strain ATCC 700278 / DSM 12444 / CCUG 56034 / CIP 105152 / NBRC 16084 / F199).